We begin with the raw amino-acid sequence, 529 residues long: Peptide chain release factor 3 (529 aa).

Residues 11 to 280 enclose the tr-type G domain; it reads AARRTFAIIS…GLVAWAPPPM (270 aa). GTP-binding positions include 20–27, 88–92, and 142–145; these read SHPDAGKT, DTPGH, and NKVD.

The protein belongs to the TRAFAC class translation factor GTPase superfamily. Classic translation factor GTPase family. PrfC subfamily.

It is found in the cytoplasm. Functionally, increases the formation of ribosomal termination complexes and stimulates activities of RF-1 and RF-2. It binds guanine nucleotides and has strong preference for UGA stop codons. It may interact directly with the ribosome. The stimulation of RF-1 and RF-2 is significantly reduced by GTP and GDP, but not by GMP. The protein is Peptide chain release factor 3 of Sodalis glossinidius (strain morsitans).